The sequence spans 98 residues: Prolactin-releasing peptide (98 aa).

The N-terminal stretch at 1-22 (MKAVGAWLLCLLLLGLALQGAA) is a signal peptide. 2 disordered regions span residues 52–71 (RFGRRRAAPGDGPRPGPRRV) and 79–98 (GGAEPSRALPGRLTAQLVQE). At phenylalanine 53 the chain carries Phenylalanine amide. The propeptide occupies 58–98 (AAPGDGPRPGPRRVPACFRLEGGAEPSRALPGRLTAQLVQE).

In terms of processing, amidation of C-terminus is required for receptor interaction. As to expression, medulla oblongata and hypothalamus.

It is found in the secreted. In terms of biological role, stimulates prolactin (PRL) release and regulates the expression of prolactin through its receptor GPR10. May stimulate lactotrophs directly to secrete PRL. This Bos taurus (Bovine) protein is Prolactin-releasing peptide (PRLH).